We begin with the raw amino-acid sequence, 906 residues long: Protein translocase subunit SecA (906 aa).

Residues Gln-86, 104–108, and Asp-499 contribute to the ATP site; that span reads GEGKT. Over residues 834-847 the composition is skewed to basic and acidic residues; the sequence is KLQKNMRESREDPA. A disordered region spans residues 834 to 887; the sequence is KLQKNMRESREDPAFSKYNAGSSLETDLKPVVSRVDPKDRNPDDPTSWGRVSRN. 4 residues coordinate Zn(2+): Cys-890, Cys-892, Cys-901, and His-902.

The protein belongs to the SecA family. Monomer and homodimer. Part of the essential Sec protein translocation apparatus which comprises SecA, SecYEG and auxiliary proteins SecDF-YajC and YidC. Zn(2+) is required as a cofactor.

Its subcellular location is the cell inner membrane. It is found in the cytoplasm. It catalyses the reaction ATP + H2O + cellular proteinSide 1 = ADP + phosphate + cellular proteinSide 2.. In terms of biological role, part of the Sec protein translocase complex. Interacts with the SecYEG preprotein conducting channel. Has a central role in coupling the hydrolysis of ATP to the transfer of proteins into and across the cell membrane, serving both as a receptor for the preprotein-SecB complex and as an ATP-driven molecular motor driving the stepwise translocation of polypeptide chains across the membrane. The polypeptide is Protein translocase subunit SecA (Rickettsia felis (strain ATCC VR-1525 / URRWXCal2) (Rickettsia azadi)).